The sequence spans 617 residues: 1-deoxy-D-xylulose-5-phosphate synthase (617 aa).

Residues His76 and 117-119 (GHS) contribute to the thiamine diphosphate site. A Mg(2+)-binding site is contributed by Asp148. Residues 149-150 (GA), Asn177, Tyr285, and Glu366 each bind thiamine diphosphate. Position 177 (Asn177) interacts with Mg(2+).

It belongs to the transketolase family. DXPS subfamily. Homodimer. Requires Mg(2+) as cofactor. Thiamine diphosphate is required as a cofactor.

The catalysed reaction is D-glyceraldehyde 3-phosphate + pyruvate + H(+) = 1-deoxy-D-xylulose 5-phosphate + CO2. Its pathway is metabolic intermediate biosynthesis; 1-deoxy-D-xylulose 5-phosphate biosynthesis; 1-deoxy-D-xylulose 5-phosphate from D-glyceraldehyde 3-phosphate and pyruvate: step 1/1. Its function is as follows. Catalyzes the acyloin condensation reaction between C atoms 2 and 3 of pyruvate and glyceraldehyde 3-phosphate to yield 1-deoxy-D-xylulose-5-phosphate (DXP). This chain is 1-deoxy-D-xylulose-5-phosphate synthase, found in Mannheimia succiniciproducens (strain KCTC 0769BP / MBEL55E).